Consider the following 995-residue polypeptide: uncharacterized protein (995 aa).

Positions 1–30 are cleaved as a signal peptide; the sequence is MFIHRMKSNLASLFLSFFLLLACEFTFSYA. N-linked (GlcNAc...) asparagine glycosylation is found at Asn-115, Asn-162, Asn-225, Asn-422, Asn-478, and Asn-486. The active site involves Glu-502. Residues Asn-546 and Asn-611 are each glycosylated (N-linked (GlcNAc...) asparagine). The Proton donor role is filled by Asp-669. N-linked (GlcNAc...) asparagine glycosylation is found at Asn-670, Asn-823, Asn-843, and Asn-986.

This sequence belongs to the glycosyl hydrolase 31 family.

The protein resides in the spore wall. This is an uncharacterized protein from Schizosaccharomyces pombe (strain 972 / ATCC 24843) (Fission yeast).